A 633-amino-acid chain; its full sequence is MKTTTVACAVAGLLFSCVSGAPDPVHVEIQQRALPNAPDGYTPSTVGCPASRPTIRSAASLSPNETSWLETRRGKTTSAMKDFFNHVKIQDFDAAGYIDRHSSNSSDLPNIGIAVSGGGYRALMNGAGAIKAFDSRTPNSTSAGQLGGLLQSATYLSGLSGGSWLVGSIYINNFTTISALQTHQKGTVWQFQNSIFEGPDGGSIQILDSATYYRDISNAVSGKSDAGYPTSITDYWGRALSYQMINATNGGPSYTWSSIALTDAFQKAEMPMPLVVADGRYPGELLISSNATVYEFNPWEFGTFDPTVFGFAPLEYLGTKFNGGSVPSNESCVRGFDNVGFVMGTSSTLFNQFLLQINSTALPDWLKSVFTDILKDIGENDEDIAQYAPNPFYHFSNTTNPSAAELELDLVDGGEDLQNIPLHPLIQPERHVDVIFAVDSSADTTYSWPNGTALVATYERSLNSSGIANGTSFPAIPDQNTFVNKGLNTRPTFFGCNSSNTTGPSPLIVYLPNYPYTAYSNFSTFQPDYTEQERDSTILNGYDVVTMGNSTRDGNWSTCVGCAILSRSLERTNTNVPEICKQCFQRYCWDGSLNSTTPAGYEPVTILDSAASGIIPSISTVAMAVVFAAWTIF.

Residues 1–20 (MKTTTVACAVAGLLFSCVSG) form the signal peptide. The PLA2c domain maps to 47-594 (GCPASRPTIR…QRYCWDGSLN (548 aa)). Residues Asn-64, Asn-104, Asn-139, Asn-173, Asn-246, Asn-290, Asn-329, Asn-358, Asn-397, Asn-450, Asn-463, Asn-469, Asn-497, Asn-500, Asn-521, Asn-549, Asn-555, and Asn-594 are each glycosylated (N-linked (GlcNAc...) asparagine). The GPI-like-anchor amidated serine moiety is linked to residue Ser-609. A propeptide spans 610–633 (AASGIIPSISTVAMAVVFAAWTIF) (removed in mature form).

Belongs to the lysophospholipase family. The GPI-like anchor contains a phosphoceramide lipid group. The anchor position has not been determined.

Its subcellular location is the cell membrane. The enzyme catalyses a 1-acyl-sn-glycero-3-phosphocholine + H2O = sn-glycerol 3-phosphocholine + a fatty acid + H(+). Catalyzes the release of fatty acids from lysophospholipids. In Aspergillus fumigatus (strain CBS 144.89 / FGSC A1163 / CEA10) (Neosartorya fumigata), this protein is Lysophospholipase 1 (plb1).